Consider the following 367-residue polypeptide: N6-succino-2-amino-2'-deoxyadenylate synthase (367 aa).

The active-site Proton acceptor is serine 17. ATP is bound by residues serine 17, threonine 18, glycine 19, lysine 20, and glycine 21. Position 17 (serine 17) interacts with dGMP. Residue serine 17 coordinates Mg(2+). Asparagine 43 is a dGMP binding site. Glycine 45, histidine 46, and threonine 47 together coordinate ATP. Glycine 45 serves as a coordination point for Mg(2+). Residues serine 128, threonine 129, and arginine 143 each coordinate dGMP. Glutamine 197 contacts ATP. Threonine 212 contacts dGMP. Residue threonine 284 coordinates Mg(2+). L-aspartate is bound by residues threonine 284, valine 285, and arginine 290. Residues asparagine 315, asparagine 318, and glycine 354 each contribute to the ATP site.

This sequence belongs to the Caudovirales PurZ family. Mg(2+) serves as cofactor.

The catalysed reaction is dGMP + L-aspartate + ATP = (2S)-2-amino-2'-deoxyadenylo-succinate + ADP + phosphate + 2 H(+). It participates in purine metabolism. Its function is as follows. Involved in the synthesis of the atypical nucleotide dZTP (2-amino-2'-deoxyadenosine-5'-triphosphate). Catalyzes the condensation of aspartate with deoxyguanylate into dSMP (N6-succino-2-amino-2'-deoxyadenylate), which undergoes defumarylation and phosphorylation respectively by host PurB and guanylate/nucleoside diphosphate kinases to give dZTP. dZTP is integrated into the viral genome instead of adenine by the viral DNA polymerase. This Z-base probably completely replaces adenosine and forms a triple bond to the opposite T-base. The resulting non-standard viral DNA is called Z-genome. The chemically modified DNA is probably harder for the host bacteria to digest with nucleases or restriction enzymes. The polypeptide is N6-succino-2-amino-2'-deoxyadenylate synthase (Salmonella phage PMBT28).